The following is a 111-amino-acid chain: Estrogen receptor (111 aa).

The segment at 1–42 is disordered; it reads PSGYAVREAGPPAYYRPNSDNRRQGGRERLASTSDKGSMAVE. A modulating region spans residues 1-49; the sequence is PSGYAVREAGPPAYYRPNSDNRRQGGRERLASTSDKGSMAVESAKETRY. A compositionally biased stretch (basic and acidic residues) spans 19–30; the sequence is SDNRRQGGRERL. Serine 32 is subject to Phosphoserine. 2 consecutive NR C4-type zinc fingers follow at residues 50-70 and 86-110; these read CAVCNDYASGYHYGVWSCEGC and CPATNQCTIDKNRRKSCQACRLRKC. The segment at residues 50–111 is a DNA-binding region (nuclear receptor); the sequence is CAVCNDYASG…CQACRLRKCY (62 aa).

The protein belongs to the nuclear hormone receptor family. NR3 subfamily. As to quaternary structure, binds DNA as a homodimer. Can form a heterodimer with ESR2. Interacts with coactivator NCOA5. Interacts with PELP1, the interaction is enhanced by 17-beta-estradiol; the interaction increases ESR1 transcriptional activity. Interacts with NCOA7; the interaction is ligand-inducible. Interacts with AKAP13, CUEDC2, HEXIM1, KDM5A, MAP1S, SMARD1, and UBE1C. Interacts with MUC1; the interaction is stimulated by 7 beta-estradiol (E2) and enhances ESR1-mediated transcription. Interacts with DNTTIP2, and UIMC1. Interacts with KMT2D/MLL2. Interacts with ATAD2; the interaction is enhanced by estradiol. Interacts with KIF18A and LDB1. Interacts with RLIM (via its C-terminus). Interacts with MACROD1. Interacts with SH2D4A and PLCG. Interacts with SH2D4A; the interaction blocks binding to PLCG and inhibits estrogen-induced cell proliferation. Interacts with DYNLL1. Interacts with CCDC62; the interaction requires estradiol and appears to enhance the transcription of target genes. Interacts with NR2C1; the interaction prevents homodimerization of ESR1 and suppresses its transcriptional activity and cell growth. Interacts with DNAAF4. Interacts with PRMT2. Interacts with RBFOX2. Interacts with EP300; the interaction is estrogen-dependent and enhanced by CITED1. Interacts with CITED1; the interaction is estrogen-dependent. Interacts with FAM120B, FOXL2, PHB2 and SLC30A9. Interacts with coactivators NCOA3 and NCOA6. Interacts with STK3/MST2 only in the presence of SAV1 and vice-versa. Binds to CSNK1D. Interacts with NCOA2; NCOA2 can interact with ESR1 AF-1 and AF-2 domains simultaneously and mediate their transcriptional synergy. Interacts with DDX5. Interacts with NCOA1; the interaction seems to require a self-association of N-terminal and C-terminal regions. Interacts with ZNF366, DDX17, NFKB1, RELA, SP1 and SP3. Interacts with NRIP1. Interacts with GPER1; the interaction occurs in an estrogen-dependent manner. Interacts with CLOCK and the interaction is stimulated by estrogen. Interacts with TRIP4 (ufmylated); estrogen dependent. Interacts with LMTK3; the interaction phosphorylates ESR1 (in vitro) and protects it against proteasomal degradation. Interacts with CCAR2 (via N-terminus) in a ligand-independent manner. Interacts with ZFHX3. Interacts with SFR1 in a ligand-dependent and -independent manner. Interacts with DCAF13, LATS1 and DCAF1; regulates ESR1 ubiquitination and ubiquitin-mediated proteasomal degradation. Interacts (via DNA-binding domain) with POU4F2 (C-terminus); this interaction increases the estrogen receptor ESR1 transcriptional activity in a DNA- and ligand 17-beta-estradiol-independent manner. Interacts with ESRRB isoform 1. Interacts with UBE3A and WBP2. Interacts with GTF2B. Interacts with RBM39. In the absence of hormonal ligand, interacts with TACC1. Interacts with PI3KR1 or PI3KR2 and PTK2/FAK1. Interacts with SRC. Interacts with BAG1; the interaction is promoted in the absence of estradiol (17-beta-estradiol/E2). Interacts with and ubiquitinated by STUB1; the interaction is promoted in the absence of estradiol (17-beta-estradiol/E2). Interacts with NEDD8. Ubiquitinated; regulated by LATS1 via DCAF1 it leads to ESR1 proteasomal degradation. Deubiquitinated by OTUB1. Ubiquitinated by STUB1/CHIP; in the CA1 hippocampal region following loss of endogenous circulating estradiol (17-beta-estradiol/E2). Ubiquitinated by UBR5, leading to its degradation: UBR5 specifically recognizes and binds ligand-bound ESR1 when it is not associated with coactivators (NCOAs). In presence of NCOAs, the UBR5-degron is not accessible, preventing its ubiquitination and degradation. In terms of processing, dimethylated by PRMT1. Demethylated by JMJD6. Post-translationally, palmitoylated by ZDHHC7 and ZDHHC21. This modification is required for plasma membrane targeting and for rapid intracellular signaling via ERK and AKT kinases and cAMP generation, but not for signaling mediated by the nuclear hormone receptor. Phosphorylated by cyclin A/CDK2 and CK1. Phosphorylation probably enhances transcriptional activity. Dephosphorylation by PPP5C inhibits its transactivation activity. Phosphorylated by LMTK3 (in vitro).

Its subcellular location is the nucleus. It localises to the cytoplasm. The protein localises to the golgi apparatus. It is found in the cell membrane. Its function is as follows. Nuclear hormone receptor. The steroid hormones and their receptors are involved in the regulation of eukaryotic gene expression and affect cellular proliferation and differentiation in target tissues. Ligand-dependent nuclear transactivation involves either direct homodimer binding to a palindromic estrogen response element (ERE) sequence or association with other DNA-binding transcription factors, such as AP-1/c-Jun, c-Fos, ATF-2, Sp1 and Sp3, to mediate ERE-independent signaling. Ligand binding induces a conformational change allowing subsequent or combinatorial association with multiprotein coactivator complexes through LXXLL motifs of their respective components. Mutual transrepression occurs between the estrogen receptor (ER) and NF-kappa-B in a cell-type specific manner. Decreases NF-kappa-B DNA-binding activity and inhibits NF-kappa-B-mediated transcription from the IL6 promoter and displace RELA/p65 and associated coregulators from the promoter. Recruited to the NF-kappa-B response element of the CCL2 and IL8 promoters and can displace CREBBP. Present with NF-kappa-B components RELA/p65 and NFKB1/p50 on ERE sequences. Can also act synergistically with NF-kappa-B to activate transcription involving respective recruitment adjacent response elements; the function involves CREBBP. Can activate the transcriptional activity of TFF1. Also mediates membrane-initiated estrogen signaling involving various kinase cascades. Essential for MTA1-mediated transcriptional regulation of BRCA1 and BCAS3. Maintains neuronal survival in response to ischemic reperfusion injury when in the presence of circulating estradiol (17-beta-estradiol/E2). The protein is Estrogen receptor (ESR1) of Ovis aries (Sheep).